Reading from the N-terminus, the 122-residue chain is Iron-sulfur cluster insertion protein ErpA (122 aa).

Iron-sulfur cluster contacts are provided by Cys50, Cys114, and Cys116.

This sequence belongs to the HesB/IscA family. Homodimer. It depends on iron-sulfur cluster as a cofactor.

In terms of biological role, required for insertion of 4Fe-4S clusters for at least IspG. This chain is Iron-sulfur cluster insertion protein ErpA, found in Alkalilimnicola ehrlichii (strain ATCC BAA-1101 / DSM 17681 / MLHE-1).